The sequence spans 1403 residues: MFRDPTAGWLTPPSPLSLLVMLLLLSRVGALRPDELFPYGESWGDQLLPEGDDESSAAVKLAIPLRFYDAQFSSLYVGTNGIISTQDFPRETQYVDDDFPTDFPAIAPFLADIDTSHSRGRILYREDTSGAVLSLAARYVRTGFPLSGSSFTPTHAFLATWEHVGAYEEVSRGAAPSGELNTFQAVLASDESDTYALFLYPANGLQFFGTRPKESYNVQLQLPARVGFCRGEADDLKREALYFSLTNTEQSVKNLYQLSNLGIPGVWAFHIGSRFALDNVRPATVGGDPSTARSSALEHPFSHAAALESYTEDSFHYYDENEEDVEYPPVEPGEAPEGHSRIDVSFNSKADPGLVDVGTSSPGSDRASPWPYPAPGNWPSYRETESASLDPQTKQGRPVGEGEVLDFRDPAELLDQMGTRAPAPPEADAALLTPVNEDLGGRNTQSYPEAGPVPSEPDVPVPPLEGEVLPHYPESGHVPPLRGGKYVIGLEDHVGSNDQVFTYNGANLETCEHSHGRCSQHAFCTDYTTGFCCHCQSRFYGNGKHCLPEGAPHRVNGKVSGRLRVGHIPVHFTDVDLHAYIVGNDGRAYTAISHVPQPAAQALLPVLPIGGLFGWLFALEKPGSENGFSLTGATFVHDVEVTFHPGEERVRITQTAEGLDPENYLSIKTNIEGQVPFIPANFTAHITPYKEFYHYRDSVVTSSSSRSFSLTSGSINQTWSYHIDQNITYQACRHAPRHLAIPATQQLTVDRAFALYSEDEGVLRFAVTNQIGPVEVDSAPVGVNPCYDGSHTCDTTARCHPGTGVDYTCECTPGFQGDGRSCVDVNECATGFHRCGPNSVCVNLVGSYRCECRSGYEFADDQHTCILIAPPPNPCLDGSHTCAPEGQARCIHHGGSSFSCACLPGFIGTGHQCSDVDECAENRCHEAAICYNTPGSFSCRCQPGYRGDGFHCTSDTVPEDSISGLKPCEYQQRYAQTQHAYPGSRIHIPQCDDQGNFVPLQCHGSTGFCWCVDRNGHEVPGTQTPPGSTPPHCGPPPEPTQRPRTVCERWRESLLEHYGGTPRDDQYVPQCDDLGHFIPLQCHGKSDFCWCVDKDGRELQGTRSQPGTRPACIPTVAPPVVRPTPRPDVTPPSVGTFLLYAQGQQIGHLPLNGSRLQKDAARTLLSLHGSIVVGIDYDCRERMVYWTDVAGRTISRASLEAGAEPETIITSGLISPEGLAIDHFRRTMYWTDSGLDKIERAELDGSERKVLFHTDLVNPRAITVDPIRGNLYWTDWNREAPKIETSSLDGENRRILINKDIGLPNGLTFDPFSKLLCWADAGTKKLECTLPDGTGRRVIQNHLNYPFSIVSYADHFYHTDWRRDGVISVNKDSGQFTDEFLPEQRSHLYGITAVYPYCPTGRK.

Positions 1–30 (MFRDPTAGWLTPPSPLSLLVMLLLLSRVGA) are cleaved as a signal peptide. The NIDO domain occupies 108–274 (PFLADIDTSH…GVWAFHIGSR (167 aa)). The tract at residues 323–403 (EDVEYPPVEP…KQGRPVGEGE (81 aa)) is disordered. O-linked (Xyl...) (chondroitin sulfate) serine glycosylation is found at serine 386 and serine 475. Positions 386–395 (SASLDPQTKQ) are enriched in polar residues. Residues 507–547 (NLETCEHSHGRCSQHAFCTDYTTGFCCHCQSRFYGNGKHCL) form the EGF-like 1 domain. Disulfide bonds link cysteine 511-cysteine 524, cysteine 518-cysteine 533, and cysteine 535-cysteine 546. The region spanning 551-781 (APHRVNGKVS…GPVEVDSAPV (231 aa)) is the Nidogen G2 beta-barrel domain. Asparagine 681, asparagine 716, and asparagine 726 each carry an N-linked (GlcNAc...) asparagine glycan. The EGF-like 2 domain occupies 782–823 (GVNPCYDGSHTCDTTARCHPGTGVDYTCECTPGFQGDGRSCV). 18 disulfide bridges follow: cysteine 786–cysteine 799, cysteine 793–cysteine 809, cysteine 811–cysteine 822, cysteine 828–cysteine 841, cysteine 835–cysteine 850, cysteine 852–cysteine 865, cysteine 875–cysteine 890, cysteine 882–cysteine 900, cysteine 902–cysteine 913, cysteine 919–cysteine 930, cysteine 924–cysteine 939, cysteine 941–cysteine 952, cysteine 968–cysteine 991, cysteine 1002–cysteine 1009, cysteine 1011–cysteine 1033, cysteine 1047–cysteine 1071, cysteine 1082–cysteine 1089, and cysteine 1091–cysteine 1112. Residues 824 to 862 (DVNECATGFHRCGPNSVCVNLVGSYRCECRSGYEFADDQ) enclose the EGF-like 3; calcium-binding domain. The 44-residue stretch at 871–914 (PPNPCLDGSHTCAPEGQARCIHHGGSSFSCACLPGFIGTGHQCS) folds into the EGF-like 4 domain. The EGF-like 5; calcium-binding domain occupies 915-953 (DVDECAENRCHEAAICYNTPGSFSCRCQPGYRGDGFHCT). Residues 946–948 (RGD) carry the Cell attachment site motif. Thyroglobulin type-1 domains lie at 965-1033 (LKPC…PPHC) and 1044-1112 (RTVC…RPAC). The interval 1021–1043 (GTQTPPGSTPPHCGPPPEPTQRP) is disordered. Positions 1027 to 1040 (GSTPPHCGPPPEPT) are enriched in pro residues. N-linked (GlcNAc...) asparagine glycosylation is present at asparagine 1152. LDL-receptor class B repeat units lie at residues 1182–1225 (RMVY…DHFR), 1226–1268 (RTMY…DPIR), 1269–1313 (GNLY…DPFS), 1314–1355 (KLLC…YADH), and 1357–1401 (YHTD…CPTG). Arginine 1336 carries the post-translational modification Omega-N-methylarginine.

As to quaternary structure, interacts with LAMA2. Interacts with COL13A1. Interacts with EFEMP2. Post-translationally, highly N- and O-glycosylated.

It localises to the secreted. Its subcellular location is the extracellular space. The protein resides in the extracellular matrix. It is found in the basement membrane. Cell adhesion glycoprotein. Might be involved in osteoblast differentiation. It probably has a role in cell-extracellular matrix interactions. The chain is Nidogen-2 (Nid2) from Mus musculus (Mouse).